We begin with the raw amino-acid sequence, 258 residues long: Pimeloyl-[acyl-carrier protein] methyl ester esterase (258 aa).

Residues 16-241 enclose the AB hydrolase-1 domain; it reads LVLLHGWGLN…GSAHAPFVSH (226 aa). Substrate contacts are provided by residues Trp-22, 82–83, and 143–147; these read SM and FLALQ. Residue Ser-82 is the Nucleophile of the active site. Catalysis depends on residues Asp-207 and His-235. Residue His-235 participates in substrate binding.

Belongs to the AB hydrolase superfamily. Carboxylesterase BioH family. In terms of assembly, monomer.

The protein localises to the cytoplasm. It catalyses the reaction 6-carboxyhexanoyl-[ACP] methyl ester + H2O = 6-carboxyhexanoyl-[ACP] + methanol + H(+). It participates in cofactor biosynthesis; biotin biosynthesis. In terms of biological role, the physiological role of BioH is to remove the methyl group introduced by BioC when the pimeloyl moiety is complete. It allows to synthesize pimeloyl-ACP via the fatty acid synthetic pathway through the hydrolysis of the ester bonds of pimeloyl-ACP esters. This Yersinia enterocolitica serotype O:8 / biotype 1B (strain NCTC 13174 / 8081) protein is Pimeloyl-[acyl-carrier protein] methyl ester esterase.